Consider the following 305-residue polypeptide: ATP synthase subunit gamma, mitochondrial (305 aa).

It belongs to the ATPase gamma chain family. F-type ATPases have 2 components, F(1) - the catalytic core - and F(o) - the membrane proton channel. F(1) has five subunits: alpha(3), beta(3), gamma(1), delta(1), epsilon(1), plus the additional subunit P18 (Tb427.05.1710) that is not present in F(1)F(o) ATP synthase from metazoa. Subunit P18 (Tb927.5.1710) interacts with the alpha subunit with a 1:1 stoichiometry; the interaction is direct. Subunit gamma is part of the central stalk. F(o) has three main subunits: a, b and c. The trypanosomal ATPase complex contains additional subunits that are not present in the F(1)F(o) ATP synthase from metazoa.

It is found in the mitochondrion. Its subcellular location is the mitochondrion inner membrane. Its function is as follows. Mitochondrial membrane ATP synthase (F(1)F(o) ATP synthase) produces ATP from ADP in the presence of a proton gradient across the membrane which is generated by electron transport complexes of the respiratory chain. F-type ATPases consist of two structural domains, F(1) - containing the extramembraneous catalytic core, and F(o) - containing the membrane proton channel, linked together by a central stalk and a peripheral stalk. During catalysis, ATP synthesis in the catalytic domain of F(1) is coupled via a rotary mechanism of the central stalk subunits to proton translocation. Subunits alpha and beta form the catalytic core in F(1). Rotation of the central stalk against the surrounding alpha(3)beta(3) subunits leads to hydrolysis of ATP in three separate catalytic sites on the beta subunits. Contrary to the procyclic, insect form that requires F(1)F(o) ATP synthase for ATP synthesis, the bloodstream form relies on ATP hydrolysis by F(1)F(o) ATP synthase to maintain its mitochondrial membrane potential. The protein is ATP synthase subunit gamma, mitochondrial of Trypanosoma brucei brucei.